Consider the following 467-residue polypeptide: MTSQLKRTLTKRYGVLELWEIIVIALFAAFIVILVLSVWLSFRKKSKRSNATTLPVTQSPRFTEEIKEISVDHGSSNNNGTSYQTLDEKFVEDIENGDKFSGSLEKKPLVGSHLPPSTPSTTAPSPLLGLPEVSHIGWGHWFTLRDLQLATNHFSKESIIGDGGYGVVYHGTLTNKTPVAVKKLLNNPGQADKDFRVEVEAIGHVRHKNLVRLLGYCVEGTHRMLVYEYMNNGNLEQWLHGDMIHKGHLTWEARIKVLVGTAKALAYLHEAIEPKVVHRDIKSSNILMDDNFDAKLSDFGLAKLLGADSNYVSTRVMGTFGYVAPEYANSGLLNEKSDVYSYGVVLLEAITGRYPVDYARPKEEVHMVEWLKLMVQQKQFEEVVDKELEIKPTTSELKRALLTALRCVDPDADKRPKMSQVARMLESDEYPVMPREERRRRRNQNAETHRESTDTNKDNDITTDAKI.

The first 35 residues, 1-35 (MTSQLKRTLTKRYGVLELWEIIVIALFAAFIVILV), serve as a signal peptide directing secretion. The Extracellular portion of the chain corresponds to 36–123 (LSVWLSFRKK…LPPSTPSTTA (88 aa)). A glycan (N-linked (GlcNAc...) asparagine) is linked at Asn-50. Ser-70 carries the phosphoserine modification. Asn-79 is a glycosylation site (N-linked (GlcNAc...) asparagine). Residues 102 to 126 (GSLEKKPLVGSHLPPSTPSTTAPSP) form a disordered region. The helical transmembrane segment at 124–144 (PSPLLGLPEVSHIGWGHWFTL) threads the bilayer. Residues 145-467 (RDLQLATNHF…DNDITTDAKI (323 aa)) are Cytoplasmic-facing. One can recognise a Protein kinase domain in the interval 154–433 (FSKESIIGDG…MLESDEYPVM (280 aa)). Residues 160-168 (IGDGGYGVV) and Lys-182 contribute to the ATP site. Phosphotyrosine is present on Tyr-227. Asp-280 (proton acceptor) is an active-site residue. Phosphoserine occurs at positions 284 and 313. Thr-314 and Thr-319 each carry phosphothreonine. Tyr-327 is modified (phosphotyrosine). The interval 413–467 (DKRPKMSQVARMLESDEYPVMPREERRRRRNQNAETHRESTDTNKDNDITTDAKI) is disordered. Residues 447–467 (ETHRESTDTNKDNDITTDAKI) show a composition bias toward basic and acidic residues.

It belongs to the protein kinase superfamily. Ser/Thr protein kinase family.

Its subcellular location is the cell membrane. The enzyme catalyses L-seryl-[protein] + ATP = O-phospho-L-seryl-[protein] + ADP + H(+). The catalysed reaction is L-threonyl-[protein] + ATP = O-phospho-L-threonyl-[protein] + ADP + H(+). This is Probable receptor-like protein kinase At3g17420 from Arabidopsis thaliana (Mouse-ear cress).